We begin with the raw amino-acid sequence, 122 residues long: Large ribosomal subunit protein uL14 (122 aa).

This sequence belongs to the universal ribosomal protein uL14 family. Part of the 50S ribosomal subunit. Forms a cluster with proteins L3 and L19. In the 70S ribosome, L14 and L19 interact and together make contacts with the 16S rRNA in bridges B5 and B8.

Functionally, binds to 23S rRNA. Forms part of two intersubunit bridges in the 70S ribosome. The protein is Large ribosomal subunit protein uL14 of Parvibaculum lavamentivorans (strain DS-1 / DSM 13023 / NCIMB 13966).